The sequence spans 421 residues: D-amino acid dehydrogenase (421 aa).

Position 4 to 18 (4 to 18 (VLVLGSGVVGLTSAW)) interacts with FAD.

The protein belongs to the DadA oxidoreductase family. It depends on FAD as a cofactor.

It catalyses the reaction a D-alpha-amino acid + A + H2O = a 2-oxocarboxylate + AH2 + NH4(+). Its function is as follows. Oxidative deamination of D-amino acids. The polypeptide is D-amino acid dehydrogenase (Vibrio cholerae serotype O1 (strain ATCC 39315 / El Tor Inaba N16961)).